Here is a 150-residue protein sequence, read N- to C-terminus: Small ribosomal subunit protein uS11 (150 aa).

The tract at residues 130–150 (DVTPIPSDSTRRKSGRRGRRL) is disordered. The segment covering 141 to 150 (RKSGRRGRRL) has biased composition (basic residues).

It belongs to the universal ribosomal protein uS11 family.

This chain is Small ribosomal subunit protein uS11 (RPS14), found in Lupinus luteus (European yellow lupine).